The sequence spans 82 residues: Cytochrome c oxidase-assembly factor cox-23, mitochondrial (82 aa).

The disordered stretch occupies residues 1-27; the sequence is MAQAGSENKEPWNEETRAKFEGKSRSE. The segment covering 7-27 has biased composition (basic and acidic residues); that stretch reads ENKEPWNEETRAKFEGKSRSE. Positions 29 to 71 constitute a CHCH domain; the sequence is LDPCQEAAQRSIRCLHRNQGDRTMCSDYFEAYRECKKQWIERR. 2 consecutive short sequence motifs (cx9C motif) follow at residues 32–42 and 53–63; these read CQEAAQRSIRC and CSDYFEAYREC. Intrachain disulfides connect C32/C63 and C42/C53.

Belongs to the COX23 family.

The protein resides in the mitochondrion intermembrane space. Required for the assembly of cytochrome c oxidase. The sequence is that of Cytochrome c oxidase-assembly factor cox-23, mitochondrial (cox-23) from Neurospora crassa (strain ATCC 24698 / 74-OR23-1A / CBS 708.71 / DSM 1257 / FGSC 987).